Here is a 102-residue protein sequence, read N- to C-terminus: Thioredoxin (102 aa).

The 102-residue stretch at 1–102 folds into the Thioredoxin domain; that stretch reads MVQVVSQENF…SLIKLISKHQ (102 aa). Cysteines 28 and 31 form a disulfide.

It belongs to the thioredoxin family.

Functionally, participates in various redox reactions through the reversible oxidation of its active center dithiol to a disulfide and catalyzes dithiol-disulfide exchange reactions. This Chlamydia trachomatis serovar D (strain ATCC VR-885 / DSM 19411 / UW-3/Cx) protein is Thioredoxin (trxA).